A 480-amino-acid polypeptide reads, in one-letter code: Protein nucleotidyltransferase YdiU (480 aa).

Residues G86, G88, R89, K109, D121, G122, R172, and R179 each contribute to the ATP site. Residue D248 is the Proton acceptor of the active site. The Mg(2+) site is built by N249 and D258. D258 is an ATP binding site.

Belongs to the SELO family. Requires Mg(2+) as cofactor. Mn(2+) is required as a cofactor.

It catalyses the reaction L-seryl-[protein] + ATP = 3-O-(5'-adenylyl)-L-seryl-[protein] + diphosphate. The enzyme catalyses L-threonyl-[protein] + ATP = 3-O-(5'-adenylyl)-L-threonyl-[protein] + diphosphate. It carries out the reaction L-tyrosyl-[protein] + ATP = O-(5'-adenylyl)-L-tyrosyl-[protein] + diphosphate. The catalysed reaction is L-histidyl-[protein] + UTP = N(tele)-(5'-uridylyl)-L-histidyl-[protein] + diphosphate. It catalyses the reaction L-seryl-[protein] + UTP = O-(5'-uridylyl)-L-seryl-[protein] + diphosphate. The enzyme catalyses L-tyrosyl-[protein] + UTP = O-(5'-uridylyl)-L-tyrosyl-[protein] + diphosphate. Functionally, nucleotidyltransferase involved in the post-translational modification of proteins. It can catalyze the addition of adenosine monophosphate (AMP) or uridine monophosphate (UMP) to a protein, resulting in modifications known as AMPylation and UMPylation. The protein is Protein nucleotidyltransferase YdiU of Klebsiella pneumoniae (strain 342).